We begin with the raw amino-acid sequence, 607 residues long: MPTYRSRTTTEGRNMAGARALWRATGMTDGDFQKPIIAVVNSFTQFVPGHVHLKDLGQLVAGEIAAAGGVAKEFNTIAVDDGIAMGHDGMLYSLPSREIIADSVEYMVNAHCADAMVCISNCDKITPGMLMAALRLNIPTVFVSGGPMEAGKVKLGDGEHALDLVDAMVMAADDSVSEEDIELVERSACPTCGSCSGMFTANSMNCLTEALGLSLPGNGSVLATHSDRQNLFKRAGHLIVDLAKRYYEGDDESVLPRSVATYDAFENAMTLDISMGGSTNTVLHLLAAAHEAGVDFTMQDIDQLSRRVPVLCKVAPAKNDVHMEDVHRAGGIMGILGELDRAGLLKTDVSTVHAPSMSAALNEWDVVRNENHHEFYRAAPGGIPTVFAFSQSRRYRELDTDREAGVIRSAEHAFSQDGGLAVLYGNLAEDGCIVKTAGVDESILKFSGPARVFESQDASVDAILSGEVKEGEVVLIRYEGPRGGPGMQEMLYPTSYLKSKGLGKACALVTDGRFSGGSSGLSIGHVSPEAAEGGTIGLVETGDLIEIDIPNRTIHLAVPDAELAARRQKREEEGWHPAEPRPRKITAALRAYASMTTSASRGAVRNI.

Mg(2+) is bound at residue aspartate 81. Cysteine 122 is a [2Fe-2S] cluster binding site. Mg(2+) is bound by residues aspartate 123 and lysine 124. Position 124 is an N6-carboxylysine (lysine 124). A [2Fe-2S] cluster-binding site is contributed by cysteine 195. Glutamate 489 contributes to the Mg(2+) binding site. The active-site Proton acceptor is the serine 515.

Belongs to the IlvD/Edd family. Homodimer. Requires [2Fe-2S] cluster as cofactor. The cofactor is Mg(2+).

The enzyme catalyses (2R)-2,3-dihydroxy-3-methylbutanoate = 3-methyl-2-oxobutanoate + H2O. It carries out the reaction (2R,3R)-2,3-dihydroxy-3-methylpentanoate = (S)-3-methyl-2-oxopentanoate + H2O. Its pathway is amino-acid biosynthesis; L-isoleucine biosynthesis; L-isoleucine from 2-oxobutanoate: step 3/4. It functions in the pathway amino-acid biosynthesis; L-valine biosynthesis; L-valine from pyruvate: step 3/4. Functionally, functions in the biosynthesis of branched-chain amino acids. Catalyzes the dehydration of (2R,3R)-2,3-dihydroxy-3-methylpentanoate (2,3-dihydroxy-3-methylvalerate) into 2-oxo-3-methylpentanoate (2-oxo-3-methylvalerate) and of (2R)-2,3-dihydroxy-3-methylbutanoate (2,3-dihydroxyisovalerate) into 2-oxo-3-methylbutanoate (2-oxoisovalerate), the penultimate precursor to L-isoleucine and L-valine, respectively. This Deinococcus radiodurans (strain ATCC 13939 / DSM 20539 / JCM 16871 / CCUG 27074 / LMG 4051 / NBRC 15346 / NCIMB 9279 / VKM B-1422 / R1) protein is Dihydroxy-acid dehydratase.